Reading from the N-terminus, the 66-residue chain is Large ribosomal subunit protein bL31 (66 aa).

The Zn(2+) site is built by Cys16, Cys18, Cys36, and Cys39.

The protein belongs to the bacterial ribosomal protein bL31 family. Type A subfamily. In terms of assembly, part of the 50S ribosomal subunit. Zn(2+) serves as cofactor.

In terms of biological role, binds the 23S rRNA. This is Large ribosomal subunit protein bL31 from Pelobacter propionicus (strain DSM 2379 / NBRC 103807 / OttBd1).